Here is a 101-residue protein sequence, read N- to C-terminus: Small ribosomal subunit protein bS18c (101 aa).

The protein belongs to the bacterial ribosomal protein bS18 family. In terms of assembly, part of the 30S ribosomal subunit.

Its subcellular location is the plastid. It localises to the chloroplast. This is Small ribosomal subunit protein bS18c from Coffea arabica (Arabian coffee).